A 544-amino-acid chain; its full sequence is Chaperonin GroEL (544 aa).

Residues 30–33, K51, 87–91, G415, 479–481, and D495 contribute to the ATP site; these read TLGP, DGTTT, and NAA.

The protein belongs to the chaperonin (HSP60) family. As to quaternary structure, forms a cylinder of 14 subunits composed of two heptameric rings stacked back-to-back. Interacts with the co-chaperonin GroES.

It localises to the cytoplasm. It catalyses the reaction ATP + H2O + a folded polypeptide = ADP + phosphate + an unfolded polypeptide.. Functionally, together with its co-chaperonin GroES, plays an essential role in assisting protein folding. The GroEL-GroES system forms a nano-cage that allows encapsulation of the non-native substrate proteins and provides a physical environment optimized to promote and accelerate protein folding. This Acinetobacter baylyi (strain ATCC 33305 / BD413 / ADP1) protein is Chaperonin GroEL.